A 490-amino-acid polypeptide reads, in one-letter code: Lipoprotein lipase (490 aa).

An N-terminal signal peptide occupies residues 1-25; the sequence is MERGRGMGKTALLAVLCLCLRGAAG. Residues 32-53 are interaction with GPIHBP1; sequence MNFEGIESKFSLRTPAEPDEDV. Cys54 and Cys67 form a disulfide bridge. Asn70 is a glycosylation site (N-linked (GlcNAc...) (complex) asparagine). 3'-nitrotyrosine is present on Tyr121. Catalysis depends on Ser159, which acts as the Nucleophile. Asp183 functions as the Charge relay system in the catalytic mechanism. Tyr191 carries the post-translational modification 3'-nitrotyrosine. Ca(2+) is bound by residues Ala194, Arg197, Ser199, and Asp202. Cysteines 243 and 266 form a disulfide. Residues 243–266 are essential for determining substrate specificity; sequence CNLGEALRLIAEKGFSDVDQLVKC. The Charge relay system role is filled by His268. 2 disulfide bridges follow: Cys291–Cys310 and Cys302–Cys305. The PLAT domain maps to 341–464; the sequence is FHYQVKIHFF…KGEEAAIFVK (124 aa). The residue at position 343 (Tyr343) is a 3'-nitrotyrosine. Asn354 and Asn386 each carry an N-linked (GlcNAc...) asparagine glycan. An important for interaction with lipoprotein particles region spans residues 417 to 421; it reads WSDWW. An important for heparin binding region spans residues 430–434; sequence RVRVK. 430 to 441 is a heparin binding site; that stretch reads RVRVKSGETQKK. Residues 443 to 467 form an interaction with GPIHBP1 region; it reads VFCSRDGSSRLGKGEEAAIFVKCLE. Cysteines 445 and 465 form a disulfide. The disordered stretch occupies residues 471–490; it reads SRKRGGAKKASKENSAHESA. Over residues 480–490 the composition is skewed to basic and acidic residues; sequence ASKENSAHESA.

Belongs to the AB hydrolase superfamily. Lipase family. Homodimer. Interacts with GPIHBP1 with 1:1 stoichiometry. Interacts with APOC2; the interaction activates LPL activity in the presence of lipids. Interaction with heparan sulfate proteoglycans is required to protect LPL against loss of activity. Associates with lipoprotein particles in blood plasma. Interacts with LMF1 and SEL1L; interaction with SEL1L is required to prevent aggregation of newly synthesized LPL in the endoplasmic reticulum (ER), and for normal export of LPL from the ER to the extracellular space. In terms of processing, N-glycan at Asn-70 is a triantennary complex oligosaccharide containing sialic acid, galactose, mannose, and N-acetylglucosamine, the reducing GlcNAc being sulfated at C6. Tyrosine nitration after lipopolysaccharide (LPS) challenge down-regulates the lipase activity.

The protein resides in the cell membrane. It is found in the secreted. The protein localises to the extracellular space. It localises to the extracellular matrix. The catalysed reaction is a triacylglycerol + H2O = a diacylglycerol + a fatty acid + H(+). The enzyme catalyses a 1,2-diacyl-sn-glycero-3-phosphocholine + H2O = a 2-acyl-sn-glycero-3-phosphocholine + a fatty acid + H(+). It catalyses the reaction 1,2,3-tri-(9Z-octadecenoyl)-glycerol + H2O = di-(9Z)-octadecenoylglycerol + (9Z)-octadecenoate + H(+). It carries out the reaction 1,2-di-(9Z-octadecenoyl)-sn-glycero-3-phosphocholine + H2O = (9Z-octadecenoyl)-sn-glycero-3-phosphocholine + (9Z)-octadecenoate + H(+). The catalysed reaction is 1,2,3-tributanoylglycerol + H2O = dibutanoylglycerol + butanoate + H(+). The enzyme catalyses 1,2-dihexadecanoyl-sn-glycero-3-phosphocholine + H2O = hexadecanoyl-sn-glycero-3-phosphocholine + hexadecanoate + H(+). Its activity is regulated as follows. Ca(2+) binding promotes protein stability and formation of the active homodimer. Its function is as follows. Key enzyme in triglyceride metabolism. Catalyzes the hydrolysis of triglycerides from circulating chylomicrons and very low density lipoproteins (VLDL), and thereby plays an important role in lipid clearance from the blood stream, lipid utilization and storage. Although it has both phospholipase and triglyceride lipase activities it is primarily a triglyceride lipase with low but detectable phospholipase activity. Mediates margination of triglyceride-rich lipoprotein particles in capillaries. Recruited to its site of action on the luminal surface of vascular endothelium by binding to GPIHBP1 and cell surface heparan sulfate proteoglycans. The chain is Lipoprotein lipase (LPL) from Gallus gallus (Chicken).